We begin with the raw amino-acid sequence, 245 residues long: 3-deoxy-manno-octulosonate cytidylyltransferase (245 aa).

Belongs to the KdsB family.

It localises to the cytoplasm. The catalysed reaction is 3-deoxy-alpha-D-manno-oct-2-ulosonate + CTP = CMP-3-deoxy-beta-D-manno-octulosonate + diphosphate. Its pathway is nucleotide-sugar biosynthesis; CMP-3-deoxy-D-manno-octulosonate biosynthesis; CMP-3-deoxy-D-manno-octulosonate from 3-deoxy-D-manno-octulosonate and CTP: step 1/1. The protein operates within bacterial outer membrane biogenesis; lipopolysaccharide biosynthesis. Functionally, activates KDO (a required 8-carbon sugar) for incorporation into bacterial lipopolysaccharide in Gram-negative bacteria. This Desulfatibacillum aliphaticivorans protein is 3-deoxy-manno-octulosonate cytidylyltransferase.